Reading from the N-terminus, the 493-residue chain is tRNA-2-methylthio-N(6)-dimethylallyladenosine synthase (493 aa).

Positions M1–A14 are enriched in polar residues. Residues M1–R31 form a disordered region. In terms of domain architecture, MTTase N-terminal spans K35–N155. Residues C44, C80, C118, C199, C203, and C206 each contribute to the [4Fe-4S] cluster site. The region spanning L185 to A417 is the Radical SAM core domain. Residues T420–D482 enclose the TRAM domain.

This sequence belongs to the methylthiotransferase family. MiaB subfamily. In terms of assembly, monomer. Requires [4Fe-4S] cluster as cofactor.

It is found in the cytoplasm. It catalyses the reaction N(6)-dimethylallyladenosine(37) in tRNA + (sulfur carrier)-SH + AH2 + 2 S-adenosyl-L-methionine = 2-methylsulfanyl-N(6)-dimethylallyladenosine(37) in tRNA + (sulfur carrier)-H + 5'-deoxyadenosine + L-methionine + A + S-adenosyl-L-homocysteine + 2 H(+). Functionally, catalyzes the methylthiolation of N6-(dimethylallyl)adenosine (i(6)A), leading to the formation of 2-methylthio-N6-(dimethylallyl)adenosine (ms(2)i(6)A) at position 37 in tRNAs that read codons beginning with uridine. This chain is tRNA-2-methylthio-N(6)-dimethylallyladenosine synthase, found in Granulibacter bethesdensis (strain ATCC BAA-1260 / CGDNIH1).